A 188-amino-acid polypeptide reads, in one-letter code: UPF0301 protein Smlt1098 (188 aa).

It belongs to the UPF0301 (AlgH) family.

This is UPF0301 protein Smlt1098 from Stenotrophomonas maltophilia (strain K279a).